The sequence spans 185 residues: Ribosome-recycling factor (185 aa).

The protein belongs to the RRF family.

Its subcellular location is the cytoplasm. In terms of biological role, responsible for the release of ribosomes from messenger RNA at the termination of protein biosynthesis. May increase the efficiency of translation by recycling ribosomes from one round of translation to another. In Pseudomonas fluorescens (strain SBW25), this protein is Ribosome-recycling factor.